A 280-amino-acid polypeptide reads, in one-letter code: Gem-associated protein 2 (280 aa).

The segment at 1–39 is may play a minor inhibitory role in snRNA binding to 5Sm (SNRPD1, SNRPD2, SNRPE, SNRPF and SNRPG) during snRNP assembly by inserting into the RNA binding pocket of 5Sm; that stretch reads MRRAELAGLKTMAWVPAESAVEELMPRLLPVEPCDLTEG. 2 positions are modified to phosphoserine: Ser81 and Ser166.

Belongs to the gemin-2 family. Monomer. Part of the core SMN complex that contains SMN1, GEMIN2/SIP1, DDX20/GEMIN3, GEMIN4, GEMIN5, GEMIN6, GEMIN7, GEMIN8 and STRAP/UNRIP. Part of the SMN-Sm complex that contains SMN1, GEMIN2/SIP1, DDX20/GEMIN3, GEMIN4, GEMIN5, GEMIN6, GEMIN7, GEMIN8, STRAP/UNRIP and the Sm proteins SNRPB, SNRPD1, SNRPD2, SNRPD3, SNRPE, SNRPF and SNRPG. Interacts with GEMIN5; the interaction is direct. Interacts (via C-terminus) with SMN1; the interaction is direct. Interacts with SNRPD1; the interaction is direct. Interacts with SNRPD2; the interaction is direct. Interacts (via N-terminus) with SNRPF; the interaction is direct. Interacts (via N-terminus) with SNRPE; the interaction is direct. Interacts (via N-terminus) with SNRPG; the interaction is direct.

Its subcellular location is the nucleus. The protein resides in the gem. It localises to the cytoplasm. Functionally, the SMN complex catalyzes the assembly of small nuclear ribonucleoproteins (snRNPs), the building blocks of the spliceosome, and thereby plays an important role in the splicing of cellular pre-mRNAs. Most spliceosomal snRNPs contain a common set of Sm proteins SNRPB, SNRPD1, SNRPD2, SNRPD3, SNRPE, SNRPF and SNRPG that assemble in a heptameric protein ring on the Sm site of the small nuclear RNA to form the core snRNP (Sm core). In the cytosol, the Sm proteins SNRPD1, SNRPD2, SNRPE, SNRPF and SNRPG (5Sm) are trapped in an inactive 6S pICln-Sm complex by the chaperone CLNS1A that controls the assembly of the core snRNP. To assemble core snRNPs, the SMN complex accepts the trapped 5Sm proteins from CLNS1A. Binding of snRNA inside 5Sm ultimately triggers eviction of the SMN complex, thereby allowing binding of SNRPD3 and SNRPB to complete assembly of the core snRNP. Within the SMN complex, GEMIN2 constrains the conformation of 5Sm, thereby promoting 5Sm binding to snRNA containing the snRNP code (a nonameric Sm site and a 3'-adjacent stem-loop), thus preventing progression of assembly until a cognate substrate is bound. The chain is Gem-associated protein 2 from Homo sapiens (Human).